Here is a 347-residue protein sequence, read N- to C-terminus: Acetylglutamate kinase, chloroplastic (347 aa).

The N-terminal 50 residues, 1-50 (MATVTSNASPKSFSFTVSNPFKTLIPNKSPSLCYPTRNKNHHRLGFSIKA), are a transit peptide targeting the chloroplast. The residue at position 51 (Thr51) is an N-acetylthreonine. 94–95 (GA) contributes to the ATP binding site. N-acetyl-L-glutamate-binding positions include Gly126, Arg148, and 242-245 (NINA). Lys260 serves as a coordination point for L-arginine. Residues 265–266 (TD) and Leu271 contribute to the ATP site. Lys282 contacts L-arginine. An ATP-binding site is contributed by 297–305 (KVAGGMIPK). Residues 334–337 (EIMS) and Gly342 contribute to the L-arginine site.

Belongs to the acetylglutamate kinase family. ArgB subfamily. In terms of assembly, interacts with GLB1. Interaction is dependent of MgATP and inhibited by 2-oxoglutarate, arginine, glutamate, citrate, and oxaloacetate.

The protein resides in the plastid. Its subcellular location is the chloroplast stroma. It catalyses the reaction N-acetyl-L-glutamate + ATP = N-acetyl-L-glutamyl 5-phosphate + ADP. It functions in the pathway amino-acid biosynthesis; L-arginine biosynthesis; N(2)-acetyl-L-ornithine from L-glutamate: step 2/4. Inhibited by arginine. Inhibition is relieved by binding to GLB1. Involved in the arginine biosynthetic pathway via the intermediate compound ornithine. This is Acetylglutamate kinase, chloroplastic from Arabidopsis thaliana (Mouse-ear cress).